A 506-amino-acid polypeptide reads, in one-letter code: MGEIQGPVRVRFAPSPTGYLHIGGVRTALFNWLFARHHGGQFILRIEDTDEKRYVPGSADDLMASLRWVGIEWDEGPDIGGPYAPYVQSLRHEAGIYRPFVEQLLESGHAYMSFTTEEELERMRAEALAGGVKAFRFRGPERDWSLDRQREMAATGRPYTVRLKTPTEGVTAFRDLVRGGERIEFRNEELYDIVLVKSSGMPVYHLAHLVDDHLMRITHVLRSDEWVASTPYHVLLYQAFGWEMPAFAHLPPILRQDGRGKLSKRTDDVAANRFWERGYLPDAMFNYLALQGWSYDGYTEIMSREELIERFTLDRVQPSPARWNPEKLLDMNGIYIRRLKTEQLADAIAPFLARAGLIGDPPTPDERAYLVQLTPLIHERLKELGEAPELLEFFFREVTLPDPLLLIQKKMDAATTVAALEAAHARLAPLEPWTHDRLEAELRALCEELGLKAGQLFGAIRVAVTGRTVAPPLFDTLVALGKSRTLRRLEAARAALTTHAGANVQS.

The short motif at 14–24 (PSPTGYLHIGG) is the 'HIGH' region element. The 'KMSKS' region motif lies at 261-265 (KLSKR). ATP is bound at residue Lys264.

The protein belongs to the class-I aminoacyl-tRNA synthetase family. Glutamate--tRNA ligase type 1 subfamily. As to quaternary structure, monomer.

It is found in the cytoplasm. The catalysed reaction is tRNA(Glu) + L-glutamate + ATP = L-glutamyl-tRNA(Glu) + AMP + diphosphate. Its function is as follows. Catalyzes the attachment of glutamate to tRNA(Glu) in a two-step reaction: glutamate is first activated by ATP to form Glu-AMP and then transferred to the acceptor end of tRNA(Glu). This chain is Glutamate--tRNA ligase, found in Roseiflexus sp. (strain RS-1).